Reading from the N-terminus, the 1095-residue chain is DNA-directed RNA polymerase subunit beta (1095 aa).

The segment at 1069–1095 (DLMQDVNPRRSTPSRPTYESLGKEYEE) is disordered.

It belongs to the RNA polymerase beta chain family. As to quaternary structure, in cyanobacteria the RNAP catalytic core is composed of 2 alpha, 1 beta, 1 beta', 1 gamma and 1 omega subunit. When a sigma factor is associated with the core the holoenzyme is formed, which can initiate transcription.

The enzyme catalyses RNA(n) + a ribonucleoside 5'-triphosphate = RNA(n+1) + diphosphate. In terms of biological role, DNA-dependent RNA polymerase catalyzes the transcription of DNA into RNA using the four ribonucleoside triphosphates as substrates. In Prochlorococcus marinus (strain NATL2A), this protein is DNA-directed RNA polymerase subunit beta.